A 181-amino-acid polypeptide reads, in one-letter code: Oligoribonuclease (181 aa).

Residues 8–171 (LIWLDLEMTG…DDIKDSIMEL (164 aa)) form the Exonuclease domain. Tyrosine 129 is an active-site residue.

Belongs to the oligoribonuclease family.

It is found in the cytoplasm. Its function is as follows. 3'-to-5' exoribonuclease specific for small oligoribonucleotides. The chain is Oligoribonuclease from Pseudoalteromonas translucida (strain TAC 125).